Here is a 245-residue protein sequence, read N- to C-terminus: Orotidine 5'-phosphate decarboxylase (245 aa).

Substrate is bound by residues Asp22, Lys44, Asp71–Thr80, Thr131, Arg192, Gln201, Gly221, and Arg222. Residue Lys73 is the Proton donor of the active site.

Belongs to the OMP decarboxylase family. Type 1 subfamily. In terms of assembly, homodimer.

It carries out the reaction orotidine 5'-phosphate + H(+) = UMP + CO2. The protein operates within pyrimidine metabolism; UMP biosynthesis via de novo pathway; UMP from orotate: step 2/2. In terms of biological role, catalyzes the decarboxylation of orotidine 5'-monophosphate (OMP) to uridine 5'-monophosphate (UMP). This Yersinia pestis bv. Antiqua (strain Antiqua) protein is Orotidine 5'-phosphate decarboxylase.